The following is a 351-amino-acid chain: AT-hook motif nuclear-localized protein 10 (351 aa).

Residues 1–151 (MSGSETGLMA…RPPGSSSKRL (151 aa)) are disordered. A compositionally biased stretch (low complexity) spans 23–37 (HQQQQHSQAQPQQSQ). A compositionally biased stretch (polar residues) spans 60 to 77 (SPPQQYQPNSAGENSVLN). The Bipartite nuclear localization signal motif lies at 97–105 (KKRRGRPRK). 2 consecutive DNA-binding regions (a.T hook) follow at residues 97–109 (KKRRGRPRKYGPD) and 138–149 (KKRGRPPGSSSK). One can recognise a PPC domain in the interval 159–301 (TGIGFTPHVL…QMGLSSPVLP (143 aa)). Composition is skewed to polar residues over residues 310–325 (MTPSSPQSRGTMSESS) and 334–351 (IHQSTGGPYNNTINMPWK). Positions 310–351 (MTPSSPQSRGTMSESSCGGGHGSPIHQSTGGPYNNTINMPWK) are disordered.

The protein resides in the nucleus. In terms of biological role, transcription factor that specifically binds AT-rich DNA sequences related to the nuclear matrix attachment regions (MARs). The polypeptide is AT-hook motif nuclear-localized protein 10 (Arabidopsis thaliana (Mouse-ear cress)).